Reading from the N-terminus, the 225-residue chain is ATP synthase F(0) complex subunit a (225 aa).

Transmembrane regions (helical) follow at residues 10–30 (PSLL…ILLL), 69–89 (LILI…LLPY), 96–116 (QLSM…LIGL), 135–155 (LLIP…PIAL), 168–188 (LLIQ…PPLS), and 194–214 (VLIL…YVFV).

This sequence belongs to the ATPase A chain family. In terms of assembly, component of the ATP synthase complex composed at least of ATP5F1A/subunit alpha, ATP5F1B/subunit beta, ATP5MC1/subunit c (homooctomer), MT-ATP6/subunit a, MT-ATP8/subunit 8, ATP5ME/subunit e, ATP5MF/subunit f, ATP5MG/subunit g, ATP5MK/subunit k, ATP5MJ/subunit j, ATP5F1C/subunit gamma, ATP5F1D/subunit delta, ATP5F1E/subunit epsilon, ATP5PF/subunit F6, ATP5PB/subunit b, ATP5PD/subunit d, ATP5PO/subunit OSCP. ATP synthase complex consists of a soluble F(1) head domain (subunits alpha(3) and beta(3)) - the catalytic core - and a membrane F(0) domain - the membrane proton channel (subunits c, a, 8, e, f, g, k and j). These two domains are linked by a central stalk (subunits gamma, delta, and epsilon) rotating inside the F1 region and a stationary peripheral stalk (subunits F6, b, d, and OSCP). Interacts with DNAJC30; interaction is direct.

The protein localises to the mitochondrion inner membrane. It carries out the reaction H(+)(in) = H(+)(out). In terms of biological role, subunit a, of the mitochondrial membrane ATP synthase complex (F(1)F(0) ATP synthase or Complex V) that produces ATP from ADP in the presence of a proton gradient across the membrane which is generated by electron transport complexes of the respiratory chain. ATP synthase complex consist of a soluble F(1) head domain - the catalytic core - and a membrane F(1) domain - the membrane proton channel. These two domains are linked by a central stalk rotating inside the F(1) region and a stationary peripheral stalk. During catalysis, ATP synthesis in the catalytic domain of F(1) is coupled via a rotary mechanism of the central stalk subunits to proton translocation. With the subunit c (ATP5MC1), forms the proton-conducting channel in the F(0) domain, that contains two crucial half-channels (inlet and outlet) that facilitate proton movement from the mitochondrial intermembrane space (IMS) into the matrix. Protons are taken up via the inlet half-channel and released through the outlet half-channel, following a Grotthuss mechanism. The protein is ATP synthase F(0) complex subunit a of Alligator mississippiensis (American alligator).